Consider the following 403-residue polypeptide: Phosphoglycerate kinase (403 aa).

Residues Asp24–Asn26, Arg39, His62–Arg65, Arg121, and Arg161 contribute to the substrate site. Residues Lys211, Gly299, Glu330, and Gly359–Ser362 each bind ATP.

It belongs to the phosphoglycerate kinase family. In terms of assembly, monomer.

It localises to the cytoplasm. The catalysed reaction is (2R)-3-phosphoglycerate + ATP = (2R)-3-phospho-glyceroyl phosphate + ADP. It participates in carbohydrate degradation; glycolysis; pyruvate from D-glyceraldehyde 3-phosphate: step 2/5. In Corynebacterium kroppenstedtii (strain DSM 44385 / JCM 11950 / CIP 105744 / CCUG 35717), this protein is Phosphoglycerate kinase.